Here is a 352-residue protein sequence, read N- to C-terminus: UDP-N-acetylglucosamine--N-acetylmuramyl-(pentapeptide) pyrophosphoryl-undecaprenol N-acetylglucosamine transferase (352 aa).

2 residues coordinate UDP-N-acetyl-alpha-D-glucosamine: S195 and Q287.

The protein belongs to the glycosyltransferase 28 family. MurG subfamily.

Its subcellular location is the cell membrane. It carries out the reaction Mur2Ac(oyl-L-Ala-gamma-D-Glu-L-Lys-D-Ala-D-Ala)-di-trans,octa-cis-undecaprenyl diphosphate + UDP-N-acetyl-alpha-D-glucosamine = beta-D-GlcNAc-(1-&gt;4)-Mur2Ac(oyl-L-Ala-gamma-D-Glu-L-Lys-D-Ala-D-Ala)-di-trans,octa-cis-undecaprenyl diphosphate + UDP + H(+). The protein operates within cell wall biogenesis; peptidoglycan biosynthesis. Its function is as follows. Cell wall formation. Catalyzes the transfer of a GlcNAc subunit on undecaprenyl-pyrophosphoryl-MurNAc-pentapeptide (lipid intermediate I) to form undecaprenyl-pyrophosphoryl-MurNAc-(pentapeptide)GlcNAc (lipid intermediate II). The chain is UDP-N-acetylglucosamine--N-acetylmuramyl-(pentapeptide) pyrophosphoryl-undecaprenol N-acetylglucosamine transferase from Streptococcus pneumoniae (strain ATCC BAA-255 / R6).